An 872-amino-acid chain; its full sequence is Translation initiation factor IF-2 (872 aa).

Residues 130–155 (AEEEAARAAEEEAARLAEEEAARRAA) are compositionally biased toward basic and acidic residues. The tract at residues 130-282 (AEEEAARAAE…RERERLKHMQ (153 aa)) is disordered. Residues 156-181 (EPQSEPEAAAPAAEPVAPTAPVAAAP) are compositionally biased toward low complexity. Positions 182–194 (APAPATPVAPAQP) are enriched in pro residues. The segment covering 195–211 (KPVAAAAPAGDATAVPR) has biased composition (low complexity). Basic and acidic residues predominate over residues 271–282 (RARERERLKHMQ). Residues 371–539 (TRPPVVTVMG…AILLQAEILD (169 aa)) form the tr-type G domain. A G1 region spans residues 380–387 (GHVDHGKT). 380–387 (GHVDHGKT) lines the GTP pocket. The tract at residues 405 to 409 (GITQH) is G2. A G3 region spans residues 427-430 (DTPG). GTP-binding positions include 427 to 431 (DTPGH) and 481 to 484 (NKID). Positions 481 to 484 (NKID) are G4. The interval 517–519 (SAK) is G5.

It belongs to the TRAFAC class translation factor GTPase superfamily. Classic translation factor GTPase family. IF-2 subfamily.

The protein resides in the cytoplasm. In terms of biological role, one of the essential components for the initiation of protein synthesis. Protects formylmethionyl-tRNA from spontaneous hydrolysis and promotes its binding to the 30S ribosomal subunits. Also involved in the hydrolysis of GTP during the formation of the 70S ribosomal complex. The chain is Translation initiation factor IF-2 from Paramagnetospirillum magneticum (strain ATCC 700264 / AMB-1) (Magnetospirillum magneticum).